The chain runs to 203 residues: Eukaryotic translation initiation factor isoform 4E (203 aa).

A compositionally biased stretch (low complexity) spans 1 to 25 (MATETAGAVVESSSAATVPSPAPEA). Residues 1 to 27 (MATETAGAVVESSSAATVPSPAPEAGS) are disordered. MRNA is bound by residues 47-52 (QGAAWG), K79, and 97-98 (WE). Cysteines 102 and 141 form a disulfide. 148–153 (RQRQDK) is a binding site for mRNA.

Belongs to the eukaryotic initiation factor 4E family. EIF4F is a multi-subunit complex, the composition of which varies with external and internal environmental conditions. It is composed of at least EIF4A, EIF4E and EIF4G. EIF4E is also known to interact with other partners. In higher plants two isoforms of EIF4F have been identified, named isoform EIF4F and isoform EIF(iso)4F. Isoform EIF4F has subunits p220 and p26, whereas isoform EIF(iso)4F has subunits p82 and p28. As to quaternary structure, (Microbial infection) Interacts with the potyvirus peanut stripe virus (PStV) helper component proteinase (HC-Pro) in the cytoplasm and with PStV viral genome-linked protein (VPg) in the nucleus; these interactions are possible in susceptible hosts but impaired in resistant plants. Post-translationally, according to the redox status, the Cys-102-Cys-141 disulfide bridge may have a role in regulating protein function by affecting its ability to bind capped mRNA. In terms of tissue distribution, expressed ubiquitously with highest levels in young leaves and roots, and lowest levels in flowers.

It is found in the cytoplasm. It localises to the nucleus. Its function is as follows. Component of the protein complex eIF4F, which is involved in the recognition of the mRNA cap, ATP-dependent unwinding of 5'-terminal secondary structure and recruitment of mRNA to the ribosome. Recognizes and binds the 7-methylguanosine-containing mRNA cap during an early step in the initiation of protein synthesis and facilitates ribosome binding by inducing the unwinding of the mRNAs secondary structures. Key component of recessive resistance to potyviruses such as peanut stripe virus (PStV). (Microbial infection) Susceptibility host factor required for viral infection by recruiting viral RNAs to the host ribosomal complex via an interaction with viral genome-linked protein (VPg). The polypeptide is Eukaryotic translation initiation factor isoform 4E (Arachis hypogaea (Peanut)).